A 232-amino-acid polypeptide reads, in one-letter code: Uridylate kinase (232 aa).

Residue 13–14 (GS) participates in ATP binding. UMP is bound at residue Gly-52. The ATP site is built by Gly-53 and Arg-57. UMP is bound by residues Asp-74 and 122–128 (LQPGQST). ATP-binding residues include Thr-147, Tyr-153, and Asp-156.

It belongs to the UMP kinase family. In terms of assembly, homohexamer.

The protein localises to the cytoplasm. The catalysed reaction is UMP + ATP = UDP + ADP. It functions in the pathway pyrimidine metabolism; CTP biosynthesis via de novo pathway; UDP from UMP (UMPK route): step 1/1. Inhibited by UTP. Functionally, catalyzes the reversible phosphorylation of UMP to UDP. The chain is Uridylate kinase from Thermofilum pendens (strain DSM 2475 / Hrk 5).